The primary structure comprises 903 residues: Protein translocase subunit SecA (903 aa).

Residues Gln87, Gly105 to Thr109, and Asp512 contribute to the ATP site. 4 residues coordinate Zn(2+): Cys887, Cys889, Cys898, and His899.

This sequence belongs to the SecA family. In terms of assembly, monomer and homodimer. Part of the essential Sec protein translocation apparatus which comprises SecA, SecYEG and auxiliary proteins SecDF-YajC and YidC. Requires Zn(2+) as cofactor.

Its subcellular location is the cell inner membrane. The protein resides in the cytoplasm. The catalysed reaction is ATP + H2O + cellular proteinSide 1 = ADP + phosphate + cellular proteinSide 2.. Its function is as follows. Part of the Sec protein translocase complex. Interacts with the SecYEG preprotein conducting channel. Has a central role in coupling the hydrolysis of ATP to the transfer of proteins into and across the cell membrane, serving both as a receptor for the preprotein-SecB complex and as an ATP-driven molecular motor driving the stepwise translocation of polypeptide chains across the membrane. The protein is Protein translocase subunit SecA of Photorhabdus laumondii subsp. laumondii (strain DSM 15139 / CIP 105565 / TT01) (Photorhabdus luminescens subsp. laumondii).